The sequence spans 238 residues: N-terminal acetyltransferase A complex catalytic subunit ARD1 (238 aa).

The N-acetyltransferase domain occupies 35–195 (YHILSWPEAS…DAYAMKKVLK (161 aa)).

The protein belongs to the acetyltransferase family. ARD1 subfamily. In terms of assembly, component of the N-terminal acetyltransferase A (NatA) complex, which is composed of ARD1, NAT1 and NAT5. Can self-associate.

Its subcellular location is the cytoplasm. The enzyme catalyses N-terminal glycyl-[protein] + acetyl-CoA = N-terminal N(alpha)-acetylglycyl-[protein] + CoA + H(+). The catalysed reaction is N-terminal L-alanyl-[protein] + acetyl-CoA = N-terminal N(alpha)-acetyl-L-alanyl-[protein] + CoA + H(+). It carries out the reaction N-terminal L-seryl-[protein] + acetyl-CoA = N-terminal N(alpha)-acetyl-L-seryl-[protein] + CoA + H(+). It catalyses the reaction N-terminal L-valyl-[protein] + acetyl-CoA = N-terminal N(alpha)-acetyl-L-valyl-[protein] + CoA + H(+). The enzyme catalyses N-terminal L-cysteinyl-[protein] + acetyl-CoA = N-terminal N(alpha)-acetyl-L-cysteinyl-[protein] + CoA + H(+). The catalysed reaction is N-terminal L-threonyl-[protein] + acetyl-CoA = N-terminal N(alpha)-acetyl-L-threonyl-[protein] + CoA + H(+). In terms of biological role, catalytic component of the NatA N-terminal acetyltransferase, which catalyzes acetylation of proteins beginning with Met-Ser, Met-Gly and Met-Ala. N-acetylation plays a role in normal eukaryotic translation and processing, protect against proteolytic degradation and protein turnover. This Saccharomyces cerevisiae (strain ATCC 204508 / S288c) (Baker's yeast) protein is N-terminal acetyltransferase A complex catalytic subunit ARD1 (ARD1).